Consider the following 165-residue polypeptide: Hemolysin, heat labile (165 aa).

The cysteines at positions 151 and 161 are disulfide-linked.

The protein belongs to the TDH hemolysin family. In terms of assembly, homodimer.

Bacterial hemolysins are exotoxins that attack blood cell membranes and cause cell rupture by mechanisms not clearly defined. This Grimontia hollisae (Vibrio hollisae) protein is Hemolysin, heat labile.